The chain runs to 254 residues: Methyltransferase-like protein 23 (254 aa).

A disordered region spans residues 1–27 (MKSFIFRQNPRKQQQEQNNLVDYSDSD). Over residues 11-21 (RKQQQEQNNLV) the composition is skewed to polar residues.

It belongs to the methyltransferase superfamily. METTL23 family.

In terms of biological role, probable methyltransferase. The protein is Methyltransferase-like protein 23 of Dictyostelium discoideum (Social amoeba).